A 331-amino-acid polypeptide reads, in one-letter code: Phosphate acyltransferase (331 aa).

Belongs to the PlsX family. As to quaternary structure, homodimer. Probably interacts with PlsY.

The protein localises to the cytoplasm. The enzyme catalyses a fatty acyl-[ACP] + phosphate = an acyl phosphate + holo-[ACP]. It participates in lipid metabolism; phospholipid metabolism. In terms of biological role, catalyzes the reversible formation of acyl-phosphate (acyl-PO(4)) from acyl-[acyl-carrier-protein] (acyl-ACP). This enzyme utilizes acyl-ACP as fatty acyl donor, but not acyl-CoA. The polypeptide is Phosphate acyltransferase (Malacoplasma penetrans (strain HF-2) (Mycoplasma penetrans)).